We begin with the raw amino-acid sequence, 744 residues long: Collagen alpha-1(VIII) chain (744 aa).

The N-terminal stretch at 1-27 (MAVPPGPPQLLQVLLTISLGSIRLIQA) is a signal peptide. The nonhelical region (NC2) stretch occupies residues 29-117 (AYYGIKPLPP…GKEIPLASLR (89 aa)). The segment covering 101-110 (KEAVPKKGKE) has biased composition (basic and acidic residues). Disordered stretches follow at residues 101 to 435 (KEAV…GLQG) and 478 to 584 (LLGP…QGEY). The triple-helical region stretch occupies residues 118 to 571 (GEQGPRGEPG…PGPPGPPGPP (454 aa)). The segment covering 128-137 (PRGPPGPPGL) has biased composition (pro residues). Residues 168 to 190 (KPGAMGMPGAKGEIGPKGEIGPM) are compositionally biased toward low complexity. Gly residues predominate over residues 203–217 (GLPGIGKPGGPGLPG). Positions 288–298 (KPGPPGEPGPQ) are enriched in pro residues. The span at 328–337 (GFPGGKGEQG) shows a compositional bias: gly residues. Positions 389–403 (PGEPGLPGIPGPMGP) are enriched in pro residues. The span at 411–420 (GPKGEGGIVG) shows a compositional bias: gly residues. Composition is skewed to low complexity over residues 478 to 506 (LLGP…TGPS) and 540 to 556 (LHGP…QGQP). Residues 558–579 (LPGPPGPPGPPGPPAVMPPTPA) show a composition bias toward pro residues. The interval 572–744 (AVMPPTPAPQ…SFSGYLLYPM (173 aa)) is nonhelical region (NC1). Residues 611–744 (PAYEMPAFTA…SFSGYLLYPM (134 aa)) form the C1q domain.

In terms of assembly, homotrimers, or heterotrimers in association with alpha 2(VIII) type collagens. Four homotrimers can form a tetrahedron stabilized by central interacting C-terminal NC1 trimers. In terms of processing, prolines at the third position of the tripeptide repeating unit (G-X-Y) are hydroxylated in some or all of the chains. Post-translationally, proteolytically cleaved by neutrophil elastase, in vitro. Proteolytic processing produces the C-terminal NC1 domain fragment, vastatin.

It localises to the secreted. The protein localises to the extracellular space. Its subcellular location is the extracellular matrix. It is found in the basement membrane. Functionally, macromolecular component of the subendothelium. Major component of the Descemet's membrane (basement membrane) of corneal endothelial cells. Also a component of the endothelia of blood vessels. Necessary for migration and proliferation of vascular smooth muscle cells and thus, has a potential role in the maintenance of vessel wall integrity and structure, in particular in atherogenesis. In terms of biological role, vastatin, the C-terminal fragment comprising the NC1 domain, inhibits aortic endothelial cell proliferation and causes cell apoptosis. The chain is Collagen alpha-1(VIII) chain (COL8A1) from Oryctolagus cuniculus (Rabbit).